The sequence spans 277 residues: Tryptophan synthase alpha chain (277 aa).

Residues Glu-50 and Asp-61 each act as proton acceptor in the active site.

This sequence belongs to the TrpA family. Tetramer of two alpha and two beta chains.

The enzyme catalyses (1S,2R)-1-C-(indol-3-yl)glycerol 3-phosphate + L-serine = D-glyceraldehyde 3-phosphate + L-tryptophan + H2O. It participates in amino-acid biosynthesis; L-tryptophan biosynthesis; L-tryptophan from chorismate: step 5/5. The alpha subunit is responsible for the aldol cleavage of indoleglycerol phosphate to indole and glyceraldehyde 3-phosphate. This Beijerinckia indica subsp. indica (strain ATCC 9039 / DSM 1715 / NCIMB 8712) protein is Tryptophan synthase alpha chain.